The following is a 218-amino-acid chain: GTP cyclohydrolase 1 (218 aa).

Cys-109, His-112, and Cys-180 together coordinate Zn(2+).

This sequence belongs to the GTP cyclohydrolase I family. As to quaternary structure, toroid-shaped homodecamer, composed of two pentamers of five dimers.

It catalyses the reaction GTP + H2O = 7,8-dihydroneopterin 3'-triphosphate + formate + H(+). The protein operates within cofactor biosynthesis; 7,8-dihydroneopterin triphosphate biosynthesis; 7,8-dihydroneopterin triphosphate from GTP: step 1/1. This Aeromonas salmonicida (strain A449) protein is GTP cyclohydrolase 1.